Reading from the N-terminus, the 484-residue chain is tRNA sulfurtransferase (484 aa).

In terms of domain architecture, THUMP spans 63 to 167; the sequence is REMIERLTCT…DQRLYVIHNQ (105 aa). ATP is bound by residues 185 to 186, Lys-267, Gly-289, and Gln-298; that span reads LM. Cys-346 and Cys-457 are oxidised to a cystine. The Rhodanese domain maps to 405 to 483; that stretch reads ALPGQIVIDI…GHANVRVYRP (79 aa). Cys-457 acts as the Cysteine persulfide intermediate in catalysis.

This sequence belongs to the ThiI family.

The protein resides in the cytoplasm. The enzyme catalyses [ThiI sulfur-carrier protein]-S-sulfanyl-L-cysteine + a uridine in tRNA + 2 reduced [2Fe-2S]-[ferredoxin] + ATP + H(+) = [ThiI sulfur-carrier protein]-L-cysteine + a 4-thiouridine in tRNA + 2 oxidized [2Fe-2S]-[ferredoxin] + AMP + diphosphate. It catalyses the reaction [ThiS sulfur-carrier protein]-C-terminal Gly-Gly-AMP + S-sulfanyl-L-cysteinyl-[cysteine desulfurase] + AH2 = [ThiS sulfur-carrier protein]-C-terminal-Gly-aminoethanethioate + L-cysteinyl-[cysteine desulfurase] + A + AMP + 2 H(+). It participates in cofactor biosynthesis; thiamine diphosphate biosynthesis. Its function is as follows. Catalyzes the ATP-dependent transfer of a sulfur to tRNA to produce 4-thiouridine in position 8 of tRNAs, which functions as a near-UV photosensor. Also catalyzes the transfer of sulfur to the sulfur carrier protein ThiS, forming ThiS-thiocarboxylate. This is a step in the synthesis of thiazole, in the thiamine biosynthesis pathway. The sulfur is donated as persulfide by IscS. This Pseudomonas putida (strain ATCC 47054 / DSM 6125 / CFBP 8728 / NCIMB 11950 / KT2440) protein is tRNA sulfurtransferase.